Consider the following 106-residue polypeptide: Nucleoid-associated protein XC_3243 (106 aa).

The segment at 82 to 106 is disordered; the sequence is DAESKERMGSATAGMQLPPGMKLPF.

The protein belongs to the YbaB/EbfC family. As to quaternary structure, homodimer.

The protein resides in the cytoplasm. Its subcellular location is the nucleoid. Binds to DNA and alters its conformation. May be involved in regulation of gene expression, nucleoid organization and DNA protection. The protein is Nucleoid-associated protein XC_3243 of Xanthomonas campestris pv. campestris (strain 8004).